We begin with the raw amino-acid sequence, 271 residues long: Formamidopyrimidine-DNA glycosylase (271 aa).

Pro-2 functions as the Schiff-base intermediate with DNA in the catalytic mechanism. Glu-3 serves as the catalytic Proton donor. Residue Lys-56 is the Proton donor; for beta-elimination activity of the active site. DNA-binding residues include His-89, Arg-107, and Arg-151. The FPG-type zinc finger occupies 236-270 (MVYDRAGLPCRVCAAPIKSIRQGQRSSFYCATCQK). The active-site Proton donor; for delta-elimination activity is Arg-260.

Belongs to the FPG family. In terms of assembly, monomer. Requires Zn(2+) as cofactor.

The catalysed reaction is Hydrolysis of DNA containing ring-opened 7-methylguanine residues, releasing 2,6-diamino-4-hydroxy-5-(N-methyl)formamidopyrimidine.. It carries out the reaction 2'-deoxyribonucleotide-(2'-deoxyribose 5'-phosphate)-2'-deoxyribonucleotide-DNA = a 3'-end 2'-deoxyribonucleotide-(2,3-dehydro-2,3-deoxyribose 5'-phosphate)-DNA + a 5'-end 5'-phospho-2'-deoxyribonucleoside-DNA + H(+). Functionally, involved in base excision repair of DNA damaged by oxidation or by mutagenic agents. Acts as a DNA glycosylase that recognizes and removes damaged bases. Has a preference for oxidized purines, such as 7,8-dihydro-8-oxoguanine (8-oxoG). Has AP (apurinic/apyrimidinic) lyase activity and introduces nicks in the DNA strand. Cleaves the DNA backbone by beta-delta elimination to generate a single-strand break at the site of the removed base with both 3'- and 5'-phosphates. The polypeptide is Formamidopyrimidine-DNA glycosylase (Polaromonas naphthalenivorans (strain CJ2)).